The primary structure comprises 447 residues: Cellulosome-anchoring protein (447 aa).

An N-terminal signal peptide occupies residues 1–29 (MKRIKRILAVLTIFALLATINAFTFVSLA). The region spanning 30-180 (QTNTIEIIIG…EIIEASAPEA (151 aa)) is the Cohesin domain. The interval 30 to 180 (QTNTIEIIIG…EIIEASAPEA (151 aa)) is receptor binding site for duplicated segment of CipA. The tract at residues 177 to 247 (APEATPTPGS…EHAPFLKGYP (71 aa)) is disordered. The span at 188-200 (AGSGAGGGTGSSG) shows a compositional bias: gly residues. Positions 201–223 (SGQPSATPTPTATEKPSTTPKTT) are enriched in low complexity. 3 SLH domains span residues 216-280 (PSTT…AGKN), 281-344 (SSIT…EQGT), and 345-408 (DVKT…GAVL). In terms of domain architecture, SLH 4; truncated spans 409-429 (EFTDVPVNYWAYKDIAEGVIY).

It localises to the secreted. The protein localises to the cell wall. The protein resides in the S-layer. In terms of biological role, anchors the cellulosome to the cell surface by binding the duplicated segment that is present at the C-terminal end of CipA. This Acetivibrio thermocellus (strain ATCC 27405 / DSM 1237 / JCM 9322 / NBRC 103400 / NCIMB 10682 / NRRL B-4536 / VPI 7372) (Clostridium thermocellum) protein is Cellulosome-anchoring protein (ancA).